A 109-amino-acid chain; its full sequence is Ig kappa chain V region 3374 (109 aa).

The segment at Ala1–Cys24 is framework-1. The tract at residues Gln25–Ala35 is complementarity-determining-1. The framework-2 stretch occupies residues Trp36–Tyr50. The tract at residues Arg51–Ser57 is complementarity-determining-2. Residues Gly58–Cys89 form a framework-3 region. Positions Gln90–Ala98 are complementarity-determining-3. A framework-4 region spans residues Phe99 to Lys108.

This chain is Ig kappa chain V region 3374, found in Oryctolagus cuniculus (Rabbit).